The primary structure comprises 748 residues: Polyribonucleotide nucleotidyltransferase (748 aa).

Mg(2+)-binding residues include Asp-487 and Asp-493. The KH domain occupies 554–613 (PSTTTIKIDKDKIRDIIGPGGKVIKEICETSGAKIDISDDGTVSVYASDRDKLKVALDKI). In terms of domain architecture, S1 motif spans 623-691 (GEIFNGTVVK…NKGKAKLTIK (69 aa)). A disordered region spans residues 695 to 733 (KDKFSNNTKPKTSVNNTKDNSEPEQRHDSSKKRAWNEDN). A compositionally biased stretch (polar residues) spans 699–712 (SNNTKPKTSVNNTK). Residues 713 to 722 (DNSEPEQRHD) are compositionally biased toward basic and acidic residues.

It belongs to the polyribonucleotide nucleotidyltransferase family. Mg(2+) serves as cofactor.

It localises to the cytoplasm. The enzyme catalyses RNA(n+1) + phosphate = RNA(n) + a ribonucleoside 5'-diphosphate. Functionally, involved in mRNA degradation. Catalyzes the phosphorolysis of single-stranded polyribonucleotides processively in the 3'- to 5'-direction. This is Polyribonucleotide nucleotidyltransferase from Rickettsia rickettsii (strain Iowa).